Here is a 254-residue protein sequence, read N- to C-terminus: Sugar fermentation stimulation protein homolog (254 aa).

Belongs to the SfsA family.

The sequence is that of Sugar fermentation stimulation protein homolog from Synechococcus sp. (strain CC9605).